The following is a 710-amino-acid chain: Protein phosphatase 1 regulatory subunit 37 (710 aa).

Residues 1-12 show a composition bias toward pro residues; it reads MEIPPQEAPPGP. The interval 1 to 46 is disordered; it reads MEIPPQEAPPGPGADADADAEAEEAPAEAGSSSGASPPTDGRLKAA. The span at 16 to 26 shows a compositional bias: acidic residues; the sequence is ADADAEAEEAP. Residues 27 to 38 show a composition bias toward low complexity; it reads AEAGSSSGASPP. 2 positions are modified to phosphoserine: S54 and S60. LRR repeat units lie at residues 224–244, 252–273, 281–301, 310–330, and 338–358; these read SLAVLHLENASLSGRPLMLLA, NLQELYLADNKLNGLQDSAQLG, SLQILDLRNNHVLDSGLAYIC, GLVTLVLWNNQLTHTGMAFLG, and SLETLNLGHNPIGNEGVRNLK. The tract at residues 487–677 is disordered; that stretch reads PLEESGDLPA…APPGLEAKGS (191 aa). Residues 512 to 531 show a composition bias toward acidic residues; that stretch reads SDSDSDSDREEQEEEEEDQS. Low complexity predominate over residues 543 to 565; it reads SSSAPCPALLPSTDSLGPGDKSP. Phosphoserine is present on S581. Residues 603-624 are compositionally biased toward pro residues; it reads PPVPPTSVSSPPPSPPSPPASP. The segment covering 637–649 has biased composition (polar residues); that stretch reads SEAQPQTEPSQAG. Over residues 656–676 the composition is skewed to low complexity; the sequence is LKPEFALALAPEAPPGLEAKG.

The protein belongs to the PPP1R37 family. In terms of assembly, interacts with PPP1CA.

Its function is as follows. Inhibits phosphatase activity of protein phosphatase 1 (PP1) complexes. This is Protein phosphatase 1 regulatory subunit 37 (Ppp1r37) from Rattus norvegicus (Rat).